Here is a 315-residue protein sequence, read N- to C-terminus: WD repeat domain-containing protein 83 (315 aa).

WD repeat units follow at residues 23–62 (CQQG…LLKT), 65–104 (GHGY…VTRK), 107–146 (GHAG…MEPI), 151–188 (ESQD…LQVD), 189–228 (YIGS…MLGE), 233–272 (VNKG…LTLK), and 275–313 (VGKA…AAEN).

Belongs to the WD repeat MORG1 family.

It localises to the cytoplasm. Functionally, molecular scaffold protein for various multimeric protein complexes. Acts as a module in the assembly of a multicomponent scaffold for the ERK pathway, linking ERK responses to specific agonists. Also involved in response to hypoxia by acting as a negative regulator of HIF1A/HIF-1-alpha. This chain is WD repeat domain-containing protein 83 (wdr83), found in Danio rerio (Zebrafish).